The following is a 127-amino-acid chain: MAKLTKKNFIDSLREMSLLEVKELVDGLKEEFGIDPNALFVSGSNQDNNKIQVEEKTEFSVIVKDFGDSSNKIPIIKTVKEITGFGLYDIQKLLNTPDAVIQEKISKEKAEEIKNKLELIGAVVEIQ.

Belongs to the bacterial ribosomal protein bL12 family. In terms of assembly, homodimer. Part of the ribosomal stalk of the 50S ribosomal subunit. Forms a multimeric L10(L12)X complex, where L10 forms an elongated spine to which 2 to 4 L12 dimers bind in a sequential fashion. Binds GTP-bound translation factors.

Forms part of the ribosomal stalk which helps the ribosome interact with GTP-bound translation factors. Is thus essential for accurate translation. The polypeptide is Large ribosomal subunit protein bL12 (Phytoplasma mali (strain AT)).